Here is a 171-residue protein sequence, read N- to C-terminus: ATP synthase subunit b (171 aa).

Residues 12–34 form a helical membrane-spanning segment; that stretch reads FGLNLNLFETNVINLAVVIFGLY.

It belongs to the ATPase B chain family. As to quaternary structure, F-type ATPases have 2 components, F(1) - the catalytic core - and F(0) - the membrane proton channel. F(1) has five subunits: alpha(3), beta(3), gamma(1), delta(1), epsilon(1). F(0) has four main subunits: a(1), b(1), b'(1) and c(10-14). The alpha and beta chains form an alternating ring which encloses part of the gamma chain. F(1) is attached to F(0) by a central stalk formed by the gamma and epsilon chains, while a peripheral stalk is formed by the delta, b and b' chains.

The protein localises to the cellular thylakoid membrane. In terms of biological role, f(1)F(0) ATP synthase produces ATP from ADP in the presence of a proton or sodium gradient. F-type ATPases consist of two structural domains, F(1) containing the extramembraneous catalytic core and F(0) containing the membrane proton channel, linked together by a central stalk and a peripheral stalk. During catalysis, ATP synthesis in the catalytic domain of F(1) is coupled via a rotary mechanism of the central stalk subunits to proton translocation. Functionally, component of the F(0) channel, it forms part of the peripheral stalk, linking F(1) to F(0). The chain is ATP synthase subunit b from Prochlorococcus marinus (strain MIT 9211).